Here is a 769-residue protein sequence, read N- to C-terminus: Multiple C2 domain and transmembrane region protein 5 (769 aa).

C2 domains lie at serine 23–tyrosine 143, proline 184–phenylalanine 305, and tyrosine 345–tyrosine 467. 5 residues coordinate Ca(2+): aspartate 56, aspartate 62, aspartate 109, aspartate 111, and aspartate 116. 2 consecutive transmembrane segments (helical) span residues isoleucine 604 to isoleucine 624 and leucine 712 to valine 732.

This sequence belongs to the MCTP family. Requires Ca(2+) as cofactor. Highly expressed in roots meristems and shoot apical meristems (SAMs). Observed in flowers.

The protein resides in the endoplasmic reticulum membrane. Functionally, may function as a signaling molecule by regulating the trafficking of other regulators. This is Multiple C2 domain and transmembrane region protein 5 from Arabidopsis thaliana (Mouse-ear cress).